The chain runs to 3677 residues: Dystrophin (3677 aa).

The tract at residues 1 to 240 is actin-binding; it reads MLWWEEVEDC…YITSLFQVLP (240 aa). 2 Calponin-homology (CH) domains span residues 15 to 119 and 134 to 240; these read DVQK…LHWQ and TNSE…QVLP. The tract at residues 63–72 is ANK2- and ANK-3 binding; the sequence is PKEKGSTRVH. 23 Spectrin repeats span residues 342–447, 451–557, 560–668, 728–828, 831–935, 944–1046, 1049–1154, 1163–1264, 1268–1464, 1469–1569, 1573–1676, 1680–1777, 1779–1875, 1878–1980, 2001–2098, 2106–2209, 2215–2316, 2317–2415, 2465–2569, 2576–2678, 2682–2786, 2800–2922, and 2927–3032; these read LDSY…SNLH, MDLQ…LLQD, LKWQ…QISQ, DITE…NWLE, NNII…ELQT, RYQE…KLEE, NKLR…EALK, LQKD…TLEE, CWHE…LFQK, EQRL…QLEK, LSRK…NLLL, KHME…TGKA, IPLK…KALE, HQWY…TLHE, YLTE…ERQG, KWRH…RVEE, SEFQ…GELE, VHIK…LRTK, ADFN…QLNE, QWLE…ALEE, LLQQ…KKSL, KRLH…RKID, and RLQE…QLHE. Residues 1416–1914 form an interaction with SYNM region; the sequence is SDLTSHEISL…PEPRDERKIK (499 aa). Residues 3047–3080 enclose the WW domain; sequence TSVQGPWERAISPNKVPYYINHETQTTCWDHPKM. Positions 3050–3400 are interaction with SYNM; the sequence is QGPWERAISP…TVLEGDNMET (351 aa). A ZZ-type; degenerate zinc finger spans residues 3300 to 3356; that stretch reads KHQAKCNICKECPIIGFRYRSLKHFNYDICQSCFFSGRVAKGHKMHYPMVEYCTPTT. Residues Cys-3305, Cys-3308, Cys-3329, and Cys-3332 each contribute to the Zn(2+) site. Residues 3458–3510 form a binds to SNTB1 region; that stretch reads DDEHLLIQHYCQSLNQDSPLSQPRSPAQILISLESEERGELERILADLEEENR. Ser-3475, Ser-3482, and Ser-3492 each carry phosphoserine. Disordered stretches follow at residues 3520-3546 and 3595-3677; these read KQQH…QSPR and EAKV…EDTM. 2 stretches are compositionally biased toward polar residues: residues 3599-3618 and 3654-3664; these read NGTT…SSQP and QLNNSFPSSRG. Ser-3604, Ser-3605, Ser-3609, Ser-3615, Ser-3616, and Ser-3658 each carry phosphoserine.

Interacts with SYNM. Interacts with the syntrophins SNTG1 and SNTG2. Interacts with KRT19. Component of the dystrophin-associated glycoprotein complex which is composed of three subcomplexes: a cytoplasmic complex comprised of DMD (or UTRN), DTNA and a number of syntrophins, such as SNTB1, SNTB2, SNTG1 and SNTG2, the transmembrane dystroglycan complex, and the sarcoglycan-sarcospan complex. Interacts with DAG1 (betaDAG1) with DMD; the interaction is inhibited by phosphorylation on the PPXY motif of DAG1. Interacts with SYNM; SNTA1 and SNTB1. Interacts with CMYA5. Directly interacts with ANK2 and ANK3; these interactions do not interfere with betaDAG1-binding and are necessary for proper localization in muscle cells. Identified in a dystroglycan complex that contains at least PRX, DRP2, UTRN, DMD and DAG1. Interacts with DTNB. Interacts with PGM5; the interaction is direct. Interacts with NOS1; localizes NOS1 to sarcolemma in muscle cells. In terms of tissue distribution, strongly expressed in skeletal muscle and weak expression observed in newborn brain which increases in adult brain.

The protein resides in the cell membrane. The protein localises to the sarcolemma. Its subcellular location is the cytoplasm. It is found in the cytoskeleton. It localises to the postsynaptic cell membrane. Anchors the extracellular matrix to the cytoskeleton via F-actin. Ligand for dystroglycan. Component of the dystrophin-associated glycoprotein complex which accumulates at the neuromuscular junction (NMJ) and at a variety of synapses in the peripheral and central nervous systems and has a structural function in stabilizing the sarcolemma. Also implicated in signaling events and synaptic transmission. This is Dystrophin (Dmd) from Rattus norvegicus (Rat).